The following is a 351-amino-acid chain: Cyanide hydratase (351 aa).

A CN hydrolase domain is found at 6 to 285; it reads YKAAAVTSEP…DGLLFVDIDL (280 aa). Glu46 acts as the Proton acceptor in catalysis. Lys128 is a catalytic residue. Residue Cys163 is the Nucleophile of the active site.

Belongs to the carbon-nitrogen hydrolase superfamily. Nitrilase family. As to quaternary structure, oligomer of dimers, forming left-handed helical fibers with a diameter of 13 nm but with lengths ranging from approximately 1 um at the leading edge of the peak to having approximately the same length and diameter at the trailing edge.

The enzyme catalyses formamide = hydrogen cyanide + H2O. Its function is as follows. Catalyzes the hydration of cyanide to formamide. Degradation of cyanide may be important for plant pathogenic fungi in infection of cyanogenic plants. This is Cyanide hydratase from Neurospora crassa (strain ATCC 24698 / 74-OR23-1A / CBS 708.71 / DSM 1257 / FGSC 987).